The sequence spans 344 residues: L-rhamnose-proton symporter (344 aa).

Transmembrane regions (helical) follow at residues 4 to 24 (AITM…CFYA), 38 to 58 (WSVG…ALLL), 68 to 88 (FSLS…IGNI), 101 to 121 (MGIG…TPII), 137 to 157 (TLLG…AGQL), 175 to 195 (LVLA…MNAA), 214 to 234 (LPSY…FCFI), 259 to 279 (VLLS…YAWG), 290 to 310 (ISWM…GLVL), and 323 to 343 (VLSL…IGMA).

The protein belongs to the L-rhamnose transporter (TC 2.A.7.6) family.

The protein localises to the cell inner membrane. It carries out the reaction L-rhamnopyranose(in) + H(+)(in) = L-rhamnopyranose(out) + H(+)(out). Its function is as follows. Uptake of L-rhamnose across the cytoplasmic membrane with the concomitant transport of protons into the cell (symport system). This chain is L-rhamnose-proton symporter, found in Escherichia coli (strain ATCC 8739 / DSM 1576 / NBRC 3972 / NCIMB 8545 / WDCM 00012 / Crooks).